A 157-amino-acid chain; its full sequence is Protein Smg (157 aa).

This sequence belongs to the Smg family.

This chain is Protein Smg, found in Buchnera aphidicola subsp. Acyrthosiphon pisum (strain 5A).